A 509-amino-acid chain; its full sequence is ATP synthase subunit alpha, mitochondrial (509 aa).

171-178 (GDRQTGKT) contacts ATP.

Belongs to the ATPase alpha/beta chains family. F-type ATPases have 2 components, CF(1) - the catalytic core - and CF(0) - the membrane proton channel. CF(1) has five subunits: alpha(3), beta(3), gamma(1), delta(1), epsilon(1). CF(0) has three main subunits: a, b and c.

It is found in the mitochondrion. It localises to the mitochondrion inner membrane. In terms of biological role, mitochondrial membrane ATP synthase (F(1)F(0) ATP synthase or Complex V) produces ATP from ADP in the presence of a proton gradient across the membrane which is generated by electron transport complexes of the respiratory chain. F-type ATPases consist of two structural domains, F(1) - containing the extramembraneous catalytic core, and F(0) - containing the membrane proton channel, linked together by a central stalk and a peripheral stalk. During catalysis, ATP synthesis in the catalytic domain of F(1) is coupled via a rotary mechanism of the central stalk subunits to proton translocation. Subunits alpha and beta form the catalytic core in F(1). Rotation of the central stalk against the surrounding alpha(3)beta(3) subunits leads to hydrolysis of ATP in three separate catalytic sites on the beta subunits. Subunit alpha does not bear the catalytic high-affinity ATP-binding sites. This chain is ATP synthase subunit alpha, mitochondrial (ATPA), found in Nicotiana plumbaginifolia (Leadwort-leaved tobacco).